The sequence spans 368 residues: DNA replication and repair protein RecF (368 aa).

30-37 is a binding site for ATP; that stretch reads GRNGQGKT.

It belongs to the RecF family.

The protein localises to the cytoplasm. In terms of biological role, the RecF protein is involved in DNA metabolism; it is required for DNA replication and normal SOS inducibility. RecF binds preferentially to single-stranded, linear DNA. It also seems to bind ATP. In Trichlorobacter lovleyi (strain ATCC BAA-1151 / DSM 17278 / SZ) (Geobacter lovleyi), this protein is DNA replication and repair protein RecF.